Reading from the N-terminus, the 669-residue chain is DNA helicase/primase complex-associated protein (669 aa).

The disordered stretch occupies residues 502–526 (RSTAGTGGEPNPRHITGPDTEGNGE).

The protein belongs to the herpesviridae HEPA family. As to quaternary structure, associates with the primase and the helicase to form the helicase-primase complex. Interacts with the origin-binding protein. Interacts with the polymerase catalytic subunit.

Its subcellular location is the host nucleus. Its function is as follows. Component of the helicase/primase complex. Unwinds the DNA at the replication forks and generates single-stranded DNA for both leading and lagging strand synthesis. The primase synthesizes short RNA primers on the lagging strand that the polymerase presumably elongates using dNTPs. The primase-associated factor has no known catalytic activity in the complex and may serve to facilitate the formation of the replisome by directly interacting with the origin-binding protein and the polymerase. This Human herpesvirus 8 type P (isolate GK18) (HHV-8) protein is DNA helicase/primase complex-associated protein (ORF40).